The sequence spans 79 residues: Beta-defensin 15 (79 aa).

Positions 1-20 are cleaved as a signal peptide; that stretch reads MKTFLFLFAVLFFLDPAKNA. Disulfide bonds link Cys-26–Cys-53, Cys-33–Cys-47, and Cys-37–Cys-54.

The protein belongs to the beta-defensin family. In terms of tissue distribution, expressed in testis and to a lesser extent in epididymis (caput, corpus and cauda). Also weakly expressed in kidneys and colon.

It is found in the secreted. Its function is as follows. Has antibacterial activity. The protein is Beta-defensin 15 (Defb15) of Mus musculus (Mouse).